The following is a 152-amino-acid chain: Deoxyuridine 5'-triphosphate nucleotidohydrolase (152 aa).

Substrate-binding positions include 71 to 73, Asn-84, 88 to 90, and Met-98; these read RSG and LID.

This sequence belongs to the dUTPase family. It depends on Mg(2+) as a cofactor.

The enzyme catalyses dUTP + H2O = dUMP + diphosphate + H(+). The protein operates within pyrimidine metabolism; dUMP biosynthesis; dUMP from dCTP (dUTP route): step 2/2. Functionally, this enzyme is involved in nucleotide metabolism: it produces dUMP, the immediate precursor of thymidine nucleotides and it decreases the intracellular concentration of dUTP so that uracil cannot be incorporated into DNA. The polypeptide is Deoxyuridine 5'-triphosphate nucleotidohydrolase (Shewanella amazonensis (strain ATCC BAA-1098 / SB2B)).